The following is a 231-amino-acid chain: Hypoxanthine-guanine-xanthine phosphoribosyltransferase (231 aa).

Residues Lys77, 144-152, Lys176, and Asp204 contribute to the GMP site; that span reads EDIIDTGKT. Catalysis depends on Asp148, which acts as the Proton acceptor. Asp204 is a binding site for Mg(2+).

The protein belongs to the purine/pyrimidine phosphoribosyltransferase family. In terms of assembly, homotetramer. It depends on Mg(2+) as a cofactor.

Its subcellular location is the cytoplasm. The catalysed reaction is IMP + diphosphate = hypoxanthine + 5-phospho-alpha-D-ribose 1-diphosphate. The enzyme catalyses GMP + diphosphate = guanine + 5-phospho-alpha-D-ribose 1-diphosphate. It carries out the reaction XMP + diphosphate = xanthine + 5-phospho-alpha-D-ribose 1-diphosphate. It participates in purine metabolism; GMP biosynthesis via salvage pathway; GMP from guanine: step 1/1. The protein operates within purine metabolism; IMP biosynthesis via salvage pathway; IMP from hypoxanthine: step 1/1. Its pathway is purine metabolism; XMP biosynthesis via salvage pathway; XMP from xanthine: step 1/1. Its function is as follows. Catalyzes the transfer of a ribosyl phosphate group from 5-phosphoribose 1-diphosphate to the N(9) of hypoxanthine, guanine or xanthine, leading to IMP, GMP and XMP, respectively. Plays a central role in the generation of purine nucleotides through the purine salvage pathway. The chain is Hypoxanthine-guanine-xanthine phosphoribosyltransferase (LACZ) from Plasmodium falciparum (isolate K1 / Thailand).